The sequence spans 472 residues: Phosphoenolpyruvate carboxykinase (ATP), glycosomal (472 aa).

Residue G221–T228 coordinates ATP.

This sequence belongs to the phosphoenolpyruvate carboxykinase (ATP) family. Homodimer.

The protein resides in the glycosome. The catalysed reaction is oxaloacetate + ATP = phosphoenolpyruvate + ADP + CO2. The protein operates within carbohydrate biosynthesis; gluconeogenesis. In terms of biological role, P60 has the capability to bind to microtubules and membrane vesicles in vitro. The protein is Phosphoenolpyruvate carboxykinase (ATP), glycosomal of Trypanosoma brucei brucei.